The sequence spans 700 residues: MADRVMCQELATPGSHYRRPKTGVPSTNVVYANGGGSWRAAPRQTQRLPRQTVQQYATGTPATGSAGRHSGRAFATAGATEEQTVEFNGAAVMGLPATPRTTKQARNKSEEAINDLLTRIPDIGKLFDVHSRIGNGTFSTVLLGTLRRESHLPDSLRRKFAIKHHIPTSHPDRIMKELQCMTKMGGKENVVGIHCCMRYDASAAFVMPFMAHDRFQDFYTRMDVPEIRQYMRNLLVALRHVHKFDVIHRDVKPSNFLYNRRRREFLLVDFGLAQHVNPPAARSSGSAAAIAAANNKNNNNNNNNNSKRPRERESKGDVQQIALDAGLGGAVKRMRLHEESNKMPLKPVNDIAPSDAPEQSVDGSNHVQPQLVQQEQQQLQPQQQQQQQQQQQQSQQQQQPQQQSQQQHPQRQPQLAQMDQTASTPSGSKYNTNRNVSAAAANNAKCVCFANPSVCLNCLMKKEVHASRAGTPGYRPPEVLLKYPDQTTAVDVWAAGVIFLSIMSTVYPFFKAPNDFIALAEIVTIFGDQAIRKTALALDRMITLSQRSRPLNLRKLCLRFRYRSVFSDAKLLKSYESVDGSCEVCRNCDQYFFNCLCEDSDYLTEPLDAYECFPPSAYDLLDRLLEINPHKRITAEEALKHPFFTAAEEAEQTEQDQLANGTPRKMRRQRYQSHRTVAASQEQVKQQVALDLQQAAINKL.

The 518-residue stretch at 127–644 folds into the Protein kinase domain; the sequence is FDVHSRIGNG…AEEALKHPFF (518 aa). Residues 133–141 and Lys-163 contribute to the ATP site; that span reads IGNGTFSTV. Residue Asp-250 is the Proton acceptor of the active site.

It belongs to the protein kinase superfamily. Ser/Thr protein kinase family. Component of the Dbf4-dependent kinase (DDK) complex consisting of Cdc7 and the Dbf4 ortholog chif. Interacts with chif (via the processed polypeptide Chiffon-A); the interaction is direct.

It catalyses the reaction L-seryl-[protein] + ATP = O-phospho-L-seryl-[protein] + ADP + H(+). The enzyme catalyses L-threonyl-[protein] + ATP = O-phospho-L-threonyl-[protein] + ADP + H(+). Activated by chif. Inhibited by the synthetic compound XL413. Its function is as follows. Catalytic component of the Dbf4-dependent kinase (DDK) complex. Phosphorylates components of the pre-replication complex, including Mcm2 and, to a lesser extent, Mcm4. Phosphorylates histones, including H3 and H2B. Required for DNA replication and mitotic proliferation, including during the endoreplication and amplification stages of DNA replication in egg chamber follicle cells of the ovary. The protein is non-specific serine/threonine protein kinase Cdc7 of Drosophila melanogaster (Fruit fly).